Reading from the N-terminus, the 315-residue chain is Putative pyruvate, phosphate dikinase regulatory protein (315 aa).

A disordered region spans residues 1–32 (MGPFGARASPEAGQVVKQPLTDDPQESLAQGE). 189 to 196 (GVSRTSKT) provides a ligand contact to ADP.

Belongs to the pyruvate, phosphate/water dikinase regulatory protein family. PDRP subfamily.

It carries out the reaction N(tele)-phospho-L-histidyl/L-threonyl-[pyruvate, phosphate dikinase] + ADP = N(tele)-phospho-L-histidyl/O-phospho-L-threonyl-[pyruvate, phosphate dikinase] + AMP + H(+). It catalyses the reaction N(tele)-phospho-L-histidyl/O-phospho-L-threonyl-[pyruvate, phosphate dikinase] + phosphate + H(+) = N(tele)-phospho-L-histidyl/L-threonyl-[pyruvate, phosphate dikinase] + diphosphate. Its function is as follows. Bifunctional serine/threonine kinase and phosphorylase involved in the regulation of the pyruvate, phosphate dikinase (PPDK) by catalyzing its phosphorylation/dephosphorylation. In Caulobacter vibrioides (strain ATCC 19089 / CIP 103742 / CB 15) (Caulobacter crescentus), this protein is Putative pyruvate, phosphate dikinase regulatory protein.